The chain runs to 458 residues: MVQITEVKENQSSRESRTAAHTHIKGLGLNEQGIAKPIEGGFVGQNEAREACGIIVDLIKSKKMSGKAVLIAGPPATGKTALALAISQELGPKVPFCPIVGSELYSAEVKKTSALMENFRRAIGLRIKETKEVYEGEVIELTPEEAENPLGGYGKTISHVIVGLKSAKGTKTLRLDPVIYESIQKERVTIGDVIYIEANTGAVKRVGRSDAYATEFDLEAEEYVPLPKGEVHKKKEIVQDVTLHDLDVANARPQGGQDVLSMMGQLLKPKKTEITDKLRTEVNKVVSKYIEQGVAELVPGVLFIDEVNMLDMEIFTYLNRALESSIAPIVVLASNRGLTTVRGSDDGVKAPHGCPPDLIDRLLIVRTLPYNQEEIKTIIGKRASLEGLTLTDDALEKLSKQGLTTSLRYAVQLLTPAGVLSTTAGRSEITVQDIEECEFLFLDSRRSTKVLQETKTFL.

A compositionally biased stretch (basic and acidic residues) spans 1–18; that stretch reads MVQITEVKENQSSRESRT. The tract at residues 1-20 is disordered; that stretch reads MVQITEVKENQSSRESRTAA. 73 to 80 lines the ATP pocket; sequence GPPATGKT.

It belongs to the RuvB family. May form heterododecamers with RVB2. Component of the SWR1 chromatin remodeling complex, the INO80 chromatin remodeling complex, and of the R2TP complex.

It localises to the nucleus. It catalyses the reaction ATP + H2O = ADP + phosphate + H(+). Its function is as follows. DNA helicase which participates in several chromatin remodeling complexes, including the SWR1 and the INO80 complexes. The SWR1 complex mediates the ATP-dependent exchange of histone H2A for the H2A variant HZT1 leading to transcriptional regulation of selected genes by chromatin remodeling. The INO80 complex remodels chromatin by shifting nucleosomes and is involved in DNA repair. Also involved in pre-rRNA processing. The polypeptide is RuvB-like helicase 1 (RVB1) (Candida albicans (strain SC5314 / ATCC MYA-2876) (Yeast)).